Reading from the N-terminus, the 20-residue chain is Hemoglobinase-like protein 1 (20 aa).

Belongs to the peptidase C13 family.

The enzyme catalyses Hydrolysis of proteins and small molecule substrates at -Asn-|-Xaa- bonds.. The sequence is that of Hemoglobinase-like protein 1 from Fasciola hepatica (Liver fluke).